The primary structure comprises 155 residues: Nucleosome assembly protein 1-like 5 (155 aa).

Over residues 1 to 16 the composition is skewed to basic and acidic residues; that stretch reads MADPEKQGPAESRAED. Positions 1–60 are disordered; it reads MADPEKQGPAESRAEDEVMEGAQGGEDAATGDSATAPAAEEPQAPAENAPKPKNDFIESL. Low complexity predominate over residues 27–49; that stretch reads DAATGDSATAPAAEEPQAPAENA. A coiled-coil region spans residues 68–94; sequence VLALKKLQKRCDKIEAKFDKEFQALEK. Residues 119-155 form a disordered region; sequence WTLEGEDDEDDEEEEDEEEEEEEAAAGATGGPDSAEK. Residues 122-142 show a composition bias toward acidic residues; the sequence is EGEDDEDDEEEEDEEEEEEEA.

It belongs to the nucleosome assembly protein (NAP) family.

It localises to the nucleus. The polypeptide is Nucleosome assembly protein 1-like 5 (Nap1l5) (Rattus norvegicus (Rat)).